A 90-amino-acid chain; its full sequence is Probable Fe(2+)-trafficking protein (90 aa).

The protein belongs to the Fe(2+)-trafficking protein family.

In terms of biological role, could be a mediator in iron transactions between iron acquisition and iron-requiring processes, such as synthesis and/or repair of Fe-S clusters in biosynthetic enzymes. This chain is Probable Fe(2+)-trafficking protein, found in Leptothrix cholodnii (strain ATCC 51168 / LMG 8142 / SP-6) (Leptothrix discophora (strain SP-6)).